Consider the following 694-residue polypeptide: MSDQEFGLDAIRNIGIMAHIDAGKTTTTERILFYAGRTHKIGEVHEGGATMDWMEQEQERGITITSAATTVFWLGAKINIIDTPGHVDFTIEVERSLRVLDGAVAVFDAVSGVEPQSETVWRQANKYGVPRIAFVNKMDRMGANYFGAVESMREKLGANAIPVHCPIGSESQFVGMVDLISQKALYFLEETLGAKWEEREIPEDLQEQCATLRMQLLEELATVDESNEAFMEKVLENPDSITEEEIHTVMRKGVIEGKINPVLCGSAFKNKGVQQLLDVIVKWLPSPLDRGNVRGINLKTGEEVSLKPSKDGPLAALAFKIMTDPYVGRITFIRIYSGTLKKGSAILNSTKDKKERISRLLEMHANERTDRDEFTVGDIGACVGLKFSVTGDTLCDENQEIVLERIEAPEPVIDMAIEPKSKGDREKLAQALSALSEEDPTFRVSTNEETGQTIISGMGELHLDILRDRMIREFRVEANVGKPQVSYKETITKTSNSETKYVKQSGGRGQYAHVCLEIEPNEPGKGNEVVSKIVGGVIPKEYIPAVIKGVEEGLNSGVLAGYGLVDVKVSIVFGSYHEVDSSEMAFKICGSMAVKEACRKALPVILEPIMKVTVITPEDHLGDVIGDLNRRRGKILGQESSRNMAQVSAEVPLSEMFGYMTSLRSLTSGRATSTMEPAFFAKVPQKIQEEIVKK.

In terms of domain architecture, tr-type G spans 9 to 288 (DAIRNIGIMA…VIVKWLPSPL (280 aa)). GTP is bound by residues 18 to 25 (AHIDAGKT), 82 to 86 (DTPGH), and 136 to 139 (NKMD).

Belongs to the TRAFAC class translation factor GTPase superfamily. Classic translation factor GTPase family. EF-G/EF-2 subfamily.

It localises to the cytoplasm. Catalyzes the GTP-dependent ribosomal translocation step during translation elongation. During this step, the ribosome changes from the pre-translocational (PRE) to the post-translocational (POST) state as the newly formed A-site-bound peptidyl-tRNA and P-site-bound deacylated tRNA move to the P and E sites, respectively. Catalyzes the coordinated movement of the two tRNA molecules, the mRNA and conformational changes in the ribosome. In Chlamydia trachomatis serovar L2b (strain UCH-1/proctitis), this protein is Elongation factor G.